We begin with the raw amino-acid sequence, 1347 residues long: Spermatogenesis-associated protein 31A5 (1347 aa).

A helical transmembrane segment spans residues 23 to 43; sequence PWVLDIFLTLVFALGFFFLLL. Disordered regions lie at residues 55–87, 106–233, 373–397, 628–657, 900–955, 1084–1161, and 1313–1335; these read PSPS…GREC, GPHL…RDST, EQDT…GPQK, DESP…KEAQ, RGIP…REAV, VHEE…PSVS, and KAVS…SHHH. Basic residues predominate over residues 60–82; the sequence is GKRKCPVGRRRRPRGRMKNHSLR. Residues 165 to 178 are compositionally biased toward polar residues; sequence LASTPSPGPMTTSV. Residues 198-211 show a composition bias toward pro residues; sequence PEPPALFPHPPHTP. 2 stretches are compositionally biased toward polar residues: residues 631-651 and 927-948; these read PGTS…STGE and LTYS…SSKA. Composition is skewed to basic and acidic residues over residues 1108–1127 and 1137–1146; these read HKSE…RLEG and RKTEDTHQDE.

It belongs to the SPATA31 family.

It is found in the membrane. Its function is as follows. May play a role in spermatogenesis. The sequence is that of Spermatogenesis-associated protein 31A5 (SPATA31A5) from Homo sapiens (Human).